Consider the following 300-residue polypeptide: uncharacterized protein (300 aa).

Belongs to the histone deacetylase family.

Its function is as follows. Putative deacetylase. This is an uncharacterized protein from Picosynechococcus sp. (strain ATCC 27264 / PCC 7002 / PR-6) (Agmenellum quadruplicatum).